Here is a 191-residue protein sequence, read N- to C-terminus: Potassium-transporting ATPase KdpC subunit (191 aa).

Residues 6–26 (PALVLFILLTLLTGGVYPLLT) form a helical membrane-spanning segment.

The protein belongs to the KdpC family. The system is composed of three essential subunits: KdpA, KdpB and KdpC.

It localises to the cell inner membrane. Functionally, part of the high-affinity ATP-driven potassium transport (or Kdp) system, which catalyzes the hydrolysis of ATP coupled with the electrogenic transport of potassium into the cytoplasm. This subunit acts as a catalytic chaperone that increases the ATP-binding affinity of the ATP-hydrolyzing subunit KdpB by the formation of a transient KdpB/KdpC/ATP ternary complex. This Klebsiella pneumoniae subsp. pneumoniae (strain ATCC 700721 / MGH 78578) protein is Potassium-transporting ATPase KdpC subunit.